The primary structure comprises 387 residues: Protein phosphatase 2C 50 (387 aa).

The region spanning 60 to 377 (VWGCASTRGR…DNITVIVVDL (318 aa)) is the PPM-type phosphatase domain. Residues aspartate 118 and glycine 119 each contribute to the Mn(2+) site. The Modulates binding affinity to PYR/PYL/RCAR abscisic acid intracellular receptors motif lies at 264-268 (VSGIL). Mn(2+) contacts are provided by aspartate 306 and aspartate 368.

It belongs to the PP2C family. Interacts with PYL3, PYL5, PYL9 and PYL10. Binding to PYL3, PYL5, PYL9 and PYL10 is dependent on the presence of abscisic acid (ABA). Interacts with SAPK10. Mg(2+) serves as cofactor. Requires Mn(2+) as cofactor.

It carries out the reaction O-phospho-L-seryl-[protein] + H2O = L-seryl-[protein] + phosphate. It catalyses the reaction O-phospho-L-threonyl-[protein] + H2O = L-threonyl-[protein] + phosphate. In terms of biological role, protein phosphatase involved in abscisic acid (ABA) signaling. Together with PYL3 and SAPK10, may form an ABA signaling module involved in stress response. The protein is Protein phosphatase 2C 50 of Oryza sativa subsp. japonica (Rice).